A 201-amino-acid chain; its full sequence is Recombination protein RecR (201 aa).

The C4-type zinc-finger motif lies at C60 to C75. In terms of domain architecture, Toprim spans A83–P178.

The protein belongs to the RecR family.

In terms of biological role, may play a role in DNA repair. It seems to be involved in an RecBC-independent recombinational process of DNA repair. It may act with RecF and RecO. This chain is Recombination protein RecR, found in Rhodopseudomonas palustris (strain BisA53).